The sequence spans 113 residues: Eukaryotic translation initiation factor 1b (113 aa).

Ser-2 bears the N-acetylserine mark. Phosphoserine is present on Ser-9.

The protein belongs to the SUI1 family.

In terms of biological role, probably involved in translation. This chain is Eukaryotic translation initiation factor 1b (EIF1B), found in Homo sapiens (Human).